We begin with the raw amino-acid sequence, 344 residues long: Uroporphyrinogen decarboxylase (344 aa).

Substrate is bound by residues 27–31 (RQAGR), F46, D76, Y151, S206, and H319.

This sequence belongs to the uroporphyrinogen decarboxylase family. Homodimer.

It is found in the cytoplasm. The enzyme catalyses uroporphyrinogen III + 4 H(+) = coproporphyrinogen III + 4 CO2. Its pathway is porphyrin-containing compound metabolism; protoporphyrin-IX biosynthesis; coproporphyrinogen-III from 5-aminolevulinate: step 4/4. Functionally, catalyzes the decarboxylation of four acetate groups of uroporphyrinogen-III to yield coproporphyrinogen-III. The chain is Uroporphyrinogen decarboxylase from Halalkalibacterium halodurans (strain ATCC BAA-125 / DSM 18197 / FERM 7344 / JCM 9153 / C-125) (Bacillus halodurans).